A 258-amino-acid chain; its full sequence is Aspartate/glutamate leucyltransferase (258 aa).

It belongs to the R-transferase family. Bpt subfamily.

Its subcellular location is the cytoplasm. The catalysed reaction is N-terminal L-glutamyl-[protein] + L-leucyl-tRNA(Leu) = N-terminal L-leucyl-L-glutamyl-[protein] + tRNA(Leu) + H(+). It catalyses the reaction N-terminal L-aspartyl-[protein] + L-leucyl-tRNA(Leu) = N-terminal L-leucyl-L-aspartyl-[protein] + tRNA(Leu) + H(+). Functionally, functions in the N-end rule pathway of protein degradation where it conjugates Leu from its aminoacyl-tRNA to the N-termini of proteins containing an N-terminal aspartate or glutamate. This Bradyrhizobium sp. (strain ORS 278) protein is Aspartate/glutamate leucyltransferase.